A 340-amino-acid polypeptide reads, in one-letter code: Sideroflexin-5 (340 aa).

4 helical membrane-spanning segments follow: residues 103–123 (IFMP…VVGL), 163–183 (FIQG…GLNV), 254–274 (LTRV…MSML), and 287–307 (LLPV…PLAI).

Belongs to the sideroflexin family. As to expression, primarily expressed in the brain.

It localises to the mitochondrion inner membrane. It carries out the reaction citrate(in) = citrate(out). Mitochondrial amino-acid transporter. Transports citrate. Does not act as a serine transporter: not able to mediate transport of serine into mitochondria. In brown adipose tissue, plays a role in the regulation of UCP1-dependent thermogenesis probably by supporting mitochondrial glycerol-3-phosphate utilization. The chain is Sideroflexin-5 from Homo sapiens (Human).